We begin with the raw amino-acid sequence, 179 residues long: uncharacterized protein (179 aa).

The interval 27–54 is disordered; the sequence is TAKKSRVQAREARAAVEENKKAQLERDK.

This is an uncharacterized protein from Escherichia coli (strain K12).